The chain runs to 844 residues: Prickle-like protein 2 (844 aa).

In terms of domain architecture, PET spans 18-126 (FDFQRNSTSD…NVRPFPVTMT (109 aa)). Ser-92 carries the post-translational modification Phosphoserine. LIM zinc-binding domains lie at 128-193 (AICE…CLKP), 193-253 (PRCA…LYAE), and 253-317 (EYCD…EDPN). 2 disordered regions span residues 314–350 (EDPN…TEEP) and 481–519 (ESYS…QQCR). Residues 318-327 (GSDSSDSAFQ) show a composition bias toward polar residues. Ser-319, Ser-321, and Ser-322 each carry phosphoserine. Residues 481–493 (ESYSDMSSQSFSE) are compositionally biased toward low complexity. Phosphothreonine is present on residues Thr-534, Thr-536, and Thr-539. Residues Ser-543, Ser-546, Ser-607, and Ser-642 each carry the phosphoserine modification. Positions 639 to 709 (MHQSFDFDGG…HLASEREAIS (71 aa)) are disordered. Residues 682 to 692 (FRPHRSRRSRR) are compositionally biased toward basic residues. A compositionally biased stretch (basic and acidic residues) spans 693–709 (SRSDNALHLASEREAIS). A Phosphoserine modification is found at Ser-731. Positions 822–844 (STLGGRGQLHSRKRQKSKNCIIS) are disordered. Cysteine methyl ester is present on Cys-841. Cys-841 carries the S-farnesyl cysteine lipid modification. A propeptide spans 842–844 (IIS) (removed in mature form).

The protein belongs to the prickle / espinas / testin family. Expressed in brain, eye and testis. Additionally in fetal brain, adult cartilage, pancreatic islet, gastric cancer and uterus tumors.

The protein resides in the nucleus membrane. The sequence is that of Prickle-like protein 2 (PRICKLE2) from Homo sapiens (Human).